The primary structure comprises 157 residues: UPF0251 protein CLD_3165 (157 aa).

It belongs to the UPF0251 family.

The polypeptide is UPF0251 protein CLD_3165 (Clostridium botulinum (strain Okra / Type B1)).